A 309-amino-acid chain; its full sequence is Ornithine carbamoyltransferase (309 aa).

Carbamoyl phosphate contacts are provided by residues 51 to 54 (STRT), glutamine 78, arginine 102, and 129 to 132 (HPVQ). Residues asparagine 160, aspartate 224, and 228-229 (SM) contribute to the L-ornithine site. Carbamoyl phosphate-binding positions include 264-265 (CL) and arginine 292.

Belongs to the aspartate/ornithine carbamoyltransferase superfamily. OTCase family.

It localises to the cytoplasm. The catalysed reaction is carbamoyl phosphate + L-ornithine = L-citrulline + phosphate + H(+). It participates in amino-acid biosynthesis; L-arginine biosynthesis; L-arginine from L-ornithine and carbamoyl phosphate: step 1/3. Its function is as follows. Reversibly catalyzes the transfer of the carbamoyl group from carbamoyl phosphate (CP) to the N(epsilon) atom of ornithine (ORN) to produce L-citrulline. The chain is Ornithine carbamoyltransferase from Campylobacter fetus subsp. fetus (strain 82-40).